The primary structure comprises 441 residues: Mannose-6-phosphate isomerase (441 aa).

Positions 111, 113, 138, and 285 each coordinate Zn(2+). The active site involves Arg-304.

It belongs to the mannose-6-phosphate isomerase type 1 family. Monomer. Zn(2+) is required as a cofactor.

Its subcellular location is the cytoplasm. The catalysed reaction is D-mannose 6-phosphate = D-fructose 6-phosphate. It participates in nucleotide-sugar biosynthesis; GDP-alpha-D-mannose biosynthesis; alpha-D-mannose 1-phosphate from D-fructose 6-phosphate: step 1/2. Involved in the synthesis of the GDP-mannose and dolichol-phosphate-mannose required for a number of critical mannosyl transfer reactions. This is Mannose-6-phosphate isomerase (PMI1) from Candida albicans (strain SC5314 / ATCC MYA-2876) (Yeast).